Reading from the N-terminus, the 75-residue chain is RNA-binding protein KhpA (75 aa).

Residues 29 to 75 enclose the KH domain; it reads SIILELKVAPEDMGKVIGKQGRIAKAIRTVIKAAAVKENKRVVVEII.

Belongs to the KhpA RNA-binding protein family. In terms of assembly, forms a complex with KhpB.

The protein localises to the cytoplasm. A probable RNA chaperone. Forms a complex with KhpB which binds to cellular RNA and controls its expression. Plays a role in peptidoglycan (PG) homeostasis and cell length regulation. The sequence is that of RNA-binding protein KhpA from Clostridium acetobutylicum (strain ATCC 824 / DSM 792 / JCM 1419 / IAM 19013 / LMG 5710 / NBRC 13948 / NRRL B-527 / VKM B-1787 / 2291 / W).